The following is a 212-amino-acid chain: Thymidylate kinase (212 aa).

Residue 11–18 participates in ATP binding; the sequence is GPEGAGKT.

Belongs to the thymidylate kinase family.

The catalysed reaction is dTMP + ATP = dTDP + ADP. Functionally, phosphorylation of dTMP to form dTDP in both de novo and salvage pathways of dTTP synthesis. The protein is Thymidylate kinase of Streptococcus pneumoniae (strain P1031).